The chain runs to 366 residues: MVREKVRVSTRTLQWKCVESRVDSKRLYYGRFILSPLMKGQADTIGIAMRRALLGEIEGTCITRAKFEKIPHEYSTIVGIQESVHEILMNLKEIVLRSNLYGTCNASICVKGPGCVTAQDILLPPSVEIIDNTQHIASLMEPIHLCIGLQIERNRGYHIKSPNNFQDGSYPIDAVFMPVRNANHSIHSYGNQNEKQEILFLEIWTNGSLTPKEALHEASRNLIDLFLPFLHAEEENLHLGKNKYNVTFPLFTFHKKLAKLRKPKNEIALKSIFIDQLELPPRIYNSLKGSKIHTLSDLLNKSQEDLMKMKHFRIEDVKQILDILEIEKAFHNRFNEENVENAFISSFFLNKTKGQKKDEMGFESLE.

Positions 1-233 (MVREKVRVST…DLFLPFLHAE (233 aa)) are alpha N-terminal domain (alpha-NTD). An alpha C-terminal domain (alpha-CTD) region spans residues 264-366 (KNEIALKSIF…KDEMGFESLE (103 aa)).

This sequence belongs to the RNA polymerase alpha chain family. In plastids the minimal PEP RNA polymerase catalytic core is composed of four subunits: alpha, beta, beta', and beta''. When a (nuclear-encoded) sigma factor is associated with the core the holoenzyme is formed, which can initiate transcription.

Its subcellular location is the plastid. The protein resides in the chloroplast. It carries out the reaction RNA(n) + a ribonucleoside 5'-triphosphate = RNA(n+1) + diphosphate. Its function is as follows. DNA-dependent RNA polymerase catalyzes the transcription of DNA into RNA using the four ribonucleoside triphosphates as substrates. This Oenothera elata subsp. hookeri (Hooker's evening primrose) protein is DNA-directed RNA polymerase subunit alpha.